The following is a 479-amino-acid chain: Cardiolipin synthase A (479 aa).

The next 2 helical transmembrane spans lie at 8–28 (FFGYLLGMIHLLGIVAALHAL) and 38–58 (IAWAMPLLFIPYLTLIPYLIF). PLD phosphodiesterase domains are found at residues 218–245 (VNFRNHRKIVVVDGLLGFIGGHNVGDEY) and 392–419 (QPGFLHQKVVLVDDDVSAIGSANLDNRS). Residues H223, K225, D230, H397, K399, and D404 contribute to the active site.

Belongs to the phospholipase D family. Cardiolipin synthase subfamily. ClsA sub-subfamily.

Its subcellular location is the cell inner membrane. The catalysed reaction is 2 a 1,2-diacyl-sn-glycero-3-phospho-(1'-sn-glycerol) = a cardiolipin + glycerol. Catalyzes the reversible phosphatidyl group transfer from one phosphatidylglycerol molecule to another to form cardiolipin (CL) (diphosphatidylglycerol) and glycerol. The protein is Cardiolipin synthase A of Pseudomonas putida (strain ATCC 700007 / DSM 6899 / JCM 31910 / BCRC 17059 / LMG 24140 / F1).